Consider the following 86-residue polypeptide: Molybdopterin synthase sulfur carrier subunit (86 aa).

Residue glycine 86 is modified to 1-thioglycine; alternate. Glycine 86 is modified (glycyl adenylate; alternate).

The protein belongs to the MoaD family. MOCS2A subfamily. In terms of assembly, heterotetramer; composed of 2 small (mocs2s) and 2 large (mocs2l) subunits. C-terminal thiocarboxylation occurs in 2 steps, it is first acyl-adenylated (-COAMP) via the hesA/moeB/thiF part of mocs3, then thiocarboxylated (-COSH) via the rhodanese domain of mocs3.

The protein resides in the cytoplasm. It participates in cofactor biosynthesis; molybdopterin biosynthesis. Acts as a sulfur carrier required for molybdopterin biosynthesis. Component of the molybdopterin synthase complex that catalyzes the conversion of precursor Z into molybdopterin by mediating the incorporation of 2 sulfur atoms into precursor Z to generate a dithiolene group. In the complex, serves as sulfur donor by being thiocarboxylated (-COSH) at its C-terminus by mocs3. After interaction with mocs2l, the sulfur is then transferred to precursor Z to form molybdopterin. The sequence is that of Molybdopterin synthase sulfur carrier subunit (mocs2s) from Dictyostelium discoideum (Social amoeba).